Reading from the N-terminus, the 400-residue chain is Argininosuccinate synthase (400 aa).

Residues 6-14 (AYSGGLDTS) and Ala-33 contribute to the ATP site. Positions 84 and 89 each coordinate L-citrulline. Gly-114 contacts ATP. Residues Thr-116, Asn-120, and Asp-121 each coordinate L-aspartate. Asn-120 contacts L-citrulline. L-citrulline-binding residues include Arg-124, Ser-173, Ser-182, Glu-258, and Tyr-270.

Belongs to the argininosuccinate synthase family. Type 1 subfamily. Homotetramer.

It is found in the cytoplasm. It catalyses the reaction L-citrulline + L-aspartate + ATP = 2-(N(omega)-L-arginino)succinate + AMP + diphosphate + H(+). The protein operates within amino-acid biosynthesis; L-arginine biosynthesis; L-arginine from L-ornithine and carbamoyl phosphate: step 2/3. The chain is Argininosuccinate synthase from Thermus thermophilus (strain ATCC 27634 / DSM 579 / HB8).